Consider the following 748-residue polypeptide: NAD(P)H-quinone oxidoreductase subunit 5, chloroplastic (748 aa).

The next 16 membrane-spanning stretches (helical) occupy residues 9–29 (WIIPFLPLPVPMLIGVGLLLV), 40–60 (WAFPSVLLLSIVMIFSADLSI), 89–109 (IDPLTSIMSILITTVGIMVLV), 121–140 (YLRFFAYMSFSNTSMLGLVT), 147–167 (IYIFWELVGMCSYLLIGFWFT), 185–205 (GDFGLLLGILGLYWITGSFEF), 224–244 (LFVTLCASLLFVGAVAKSAQF), 258–278 (TPISALIHAATMVAAGIFLVA), 280–300 (LFPLFTVIPYIMNLISLIGII), 327–347 (LGYTMLALGMGSYRAALFHLI), 354–374 (ALLFLGSGSIIHSMETVVGYS), 396–416 (TAFLLGTLSLCGIPPLACFWS), 425–445 (WLYSPIFAIIACSTAGLTAFY), 551–571 (LLPLLVLVLFTLFVGFIGIPF), 605–625 (FITNAIFSVSIAYFGIFIASL), and 726–746 (YLFLYLSYVLIFLLISYFLFL).

This sequence belongs to the complex I subunit 5 family. In terms of assembly, NDH is composed of at least 16 different subunits, 5 of which are encoded in the nucleus.

The protein localises to the plastid. It is found in the chloroplast thylakoid membrane. The catalysed reaction is a plastoquinone + NADH + (n+1) H(+)(in) = a plastoquinol + NAD(+) + n H(+)(out). The enzyme catalyses a plastoquinone + NADPH + (n+1) H(+)(in) = a plastoquinol + NADP(+) + n H(+)(out). Functionally, NDH shuttles electrons from NAD(P)H:plastoquinone, via FMN and iron-sulfur (Fe-S) centers, to quinones in the photosynthetic chain and possibly in a chloroplast respiratory chain. The immediate electron acceptor for the enzyme in this species is believed to be plastoquinone. Couples the redox reaction to proton translocation, and thus conserves the redox energy in a proton gradient. This Platanus occidentalis (Sycamore) protein is NAD(P)H-quinone oxidoreductase subunit 5, chloroplastic (ndhF).